Here is a 488-residue protein sequence, read N- to C-terminus: Ribulose bisphosphate carboxylase large chain (488 aa).

Residues asparagine 127 and threonine 177 each coordinate substrate. Residue lysine 179 is the Proton acceptor of the active site. Position 181 (lysine 181) interacts with substrate. Mg(2+) contacts are provided by lysine 205, aspartate 207, and glutamate 208. Lysine 205 is subject to N6-carboxylysine. Histidine 297 serves as the catalytic Proton acceptor. Arginine 298, histidine 330, and serine 382 together coordinate substrate.

It belongs to the RuBisCO large chain family. Type I subfamily. Heterohexadecamer of 8 large chains and 8 small chains. Requires Mg(2+) as cofactor.

It localises to the plastid. It is found in the chloroplast. It catalyses the reaction 2 (2R)-3-phosphoglycerate + 2 H(+) = D-ribulose 1,5-bisphosphate + CO2 + H2O. It carries out the reaction D-ribulose 1,5-bisphosphate + O2 = 2-phosphoglycolate + (2R)-3-phosphoglycerate + 2 H(+). Its function is as follows. RuBisCO catalyzes two reactions: the carboxylation of D-ribulose 1,5-bisphosphate, the primary event in carbon dioxide fixation, as well as the oxidative fragmentation of the pentose substrate in the photorespiration process. Both reactions occur simultaneously and in competition at the same active site. The chain is Ribulose bisphosphate carboxylase large chain (rbcL) from Porphyra umbilicalis (Purple laver).